A 312-amino-acid polypeptide reads, in one-letter code: Cobalamin biosynthesis protein CobD (312 aa).

4 consecutive transmembrane segments (helical) span residues 61–81 (IALL…LPLL), 83–103 (IIVP…AQHA), 152–172 (DAVF…AVLY), and 292–312 (GMWL…AIHA).

This sequence belongs to the CobD/CbiB family.

Its subcellular location is the cell membrane. The protein operates within cofactor biosynthesis; adenosylcobalamin biosynthesis. In terms of biological role, converts cobyric acid to cobinamide by the addition of aminopropanol on the F carboxylic group. This Chromobacterium violaceum (strain ATCC 12472 / DSM 30191 / JCM 1249 / CCUG 213 / NBRC 12614 / NCIMB 9131 / NCTC 9757 / MK) protein is Cobalamin biosynthesis protein CobD.